Reading from the N-terminus, the 589-residue chain is Malto-oligosyltrehalose trehalohydrolase (589 aa).

Residue glycine 256–histidine 261 coordinates substrate. Catalysis depends on aspartate 258, which acts as the Nucleophile. The active-site Proton donor is glutamate 295. Substrate contacts are provided by residues aspartate 320–threonine 324 and histidine 390–asparagine 395.

The protein belongs to the glycosyl hydrolase 13 family.

Its subcellular location is the cytoplasm. The catalysed reaction is hydrolysis of (1-&gt;4)-alpha-D-glucosidic linkage in 4-alpha-D-[(1-&gt;4)-alpha-D-glucanosyl]n trehalose to yield trehalose and (1-&gt;4)-alpha-D-glucan.. Its pathway is glycan biosynthesis; trehalose biosynthesis. This chain is Malto-oligosyltrehalose trehalohydrolase (treZ), found in Brevibacterium helvolum.